Consider the following 67-residue polypeptide: Large ribosomal subunit protein uL29 (67 aa).

Belongs to the universal ribosomal protein uL29 family.

The protein is Large ribosomal subunit protein uL29 of Rhizorhabdus wittichii (strain DSM 6014 / CCUG 31198 / JCM 15750 / NBRC 105917 / EY 4224 / RW1) (Sphingomonas wittichii).